A 413-amino-acid chain; its full sequence is Glutamate-1-semialdehyde 2,1-aminomutase (413 aa).

Lys260 carries the N6-(pyridoxal phosphate)lysine modification.

It belongs to the class-III pyridoxal-phosphate-dependent aminotransferase family. HemL subfamily. Requires pyridoxal 5'-phosphate as cofactor.

It localises to the cytoplasm. The enzyme catalyses (S)-4-amino-5-oxopentanoate = 5-aminolevulinate. It functions in the pathway porphyrin-containing compound metabolism; protoporphyrin-IX biosynthesis; 5-aminolevulinate from L-glutamyl-tRNA(Glu): step 2/2. The sequence is that of Glutamate-1-semialdehyde 2,1-aminomutase from Methanoregula boonei (strain DSM 21154 / JCM 14090 / 6A8).